The primary structure comprises 326 residues: Probable cell division protein WhiA (326 aa).

A DNA-binding region (H-T-H motif) is located at residues 275 to 308 (SLDELGRLADPPMTKDAIAGRIRRLLAMADKRAL).

Belongs to the WhiA family.

Functionally, involved in cell division and chromosome segregation. The polypeptide is Probable cell division protein WhiA (Paenarthrobacter aurescens (strain TC1)).